The primary structure comprises 410 residues: Subtilisin-like protease CPC735_003880 (410 aa).

A signal peptide spans 1–17 (MKLLKSSLLLLLPFVTA). The propeptide occupies 18-118 (NPIPSEDKDI…VTPDRKVYLA (101 aa)). The 88-residue stretch at 31-118 (RYIVTLKDGI…VTPDRKVYLA (88 aa)) folds into the Inhibitor I9 domain. The Peptidase S8 domain maps to 127–410 (GYNLGHMSSK…IQEMNETVIA (284 aa)). Aspartate 159 functions as the Charge relay system in the catalytic mechanism. Asparagine 182 carries N-linked (GlcNAc...) asparagine glycosylation. The active-site Charge relay system is the histidine 191. Asparagine 238, asparagine 251, and asparagine 338 each carry an N-linked (GlcNAc...) asparagine glycan. The active-site Charge relay system is the serine 347. Asparagine 405 carries N-linked (GlcNAc...) asparagine glycosylation.

This sequence belongs to the peptidase S8 family.

The protein resides in the secreted. In terms of biological role, secreted subtilisin-like serine protease with keratinolytic activity that contributes to pathogenicity. This Coccidioides posadasii (strain C735) (Valley fever fungus) protein is Subtilisin-like protease CPC735_003880.